A 253-amino-acid chain; its full sequence is Discoidin-1 subunit B/C (253 aa).

Residue Ser-2 is modified to N-acetylserine. In terms of domain architecture, F5/8 type C spans 2 to 152 (STQGLVQLIS…ISLRCEFYTQ (151 aa)). The short motif at 79–81 (RGD) is the Cell attachment site element.

In terms of assembly, tetramer of four different chains (A to D). In terms of tissue distribution, stalk cells.

The protein resides in the cytoplasm. Functionally, galactose- and N-acetylgalactosamine-binding lectin. May play a role in cell-substratum adhesion rather than in cell-cell adhesion. May be necessary for the maintenance of normal elongate morphology during aggregation. This Dictyostelium discoideum (Social amoeba) protein is Discoidin-1 subunit B/C (dscC-1).